We begin with the raw amino-acid sequence, 416 residues long: Actin-like protein 9 (416 aa).

The disordered stretch occupies residues M1 to M40.

The protein belongs to the actin family. As to quaternary structure, interacts with ACTL7A. Testis-specific.

Its subcellular location is the cytoplasmic vesicle. The protein resides in the secretory vesicle. It localises to the acrosome. The protein localises to the cytoplasm. It is found in the cytoskeleton. Its subcellular location is the perinuclear theca. Its function is as follows. Testis-specic protein that plays an important role in fusion of proacrosomal vesicles and perinuclear theca formation. This Homo sapiens (Human) protein is Actin-like protein 9.